A 457-amino-acid chain; its full sequence is Cyclic dof factor 2 (457 aa).

The disordered stretch occupies residues 1–130; it reads MADPAIKLFG…GGTACSQEGK (130 aa). The segment covering 22–35 has biased composition (polar residues); that stretch reads DSSSSYTGFLTETQ. 2 stretches are compositionally biased toward acidic residues: residues 45-54 and 62-73; these read TGDDDDEEMG and EGDDVGDGGGES. Basic and acidic residues-rich tracts occupy residues 74–94 and 106–118; these read ETDK…RNES and EKTE…KTNE. The segment at 138–192 adopts a Dof-type zinc-finger fold; the sequence is LPCPRCNSMETKFCYYNNYNVNQPRHFCKKCQRYWTAGGTMRNVPVGAGRRKNKS. Zn(2+) contacts are provided by Cys140, Cys143, Cys165, and Cys168. 2 disordered regions span residues 334 to 377 and 417 to 457; these read QPNS…KSKP and AFRS…HESS. Residues 337–346 are compositionally biased toward low complexity; it reads SPSGSNPNSP.

In terms of assembly, interacts with ADO2 (via kelch repeats) and ADO3 (via kelch repeats). In terms of tissue distribution, expressed in the vasculature of cotyledons and hypocotyls, leaves and roots.

It is found in the nucleus. Its function is as follows. Transcription factor that binds specifically to a 5'-AA[AG]G-3' consensus core sequence. Regulates a photoperiodic flowering response. Transcriptional repressor of 'CONSTANS' expression. The stability of CDF2 is controlled by 'GIGANTEA' and redundantly by ADO3, ADO2 and/or ADO1. The chain is Cyclic dof factor 2 (CDF2) from Arabidopsis thaliana (Mouse-ear cress).